The primary structure comprises 550 residues: Dipeptide-binding protein (550 aa).

An N-terminal signal peptide occupies residues 1 to 22 (MKQAKIIGLSTVIALSGIILVA). Cysteine 23 is lipidated: N-palmitoyl cysteine. A lipid anchor (S-diacylglycerol cysteine) is attached at cysteine 23.

The protein belongs to the bacterial solute-binding protein 5 family. The complex is composed of two ATP-binding proteins (DppD and DppF), two transmembrane proteins (DppB and DppC) and a solute-binding protein (DppA).

It is found in the cell membrane. Part of the ABC transporter DppABCDF involved in dipeptide transport. Binds di- and tripeptides with high affinity. Requires a free N-terminal alpha-amino group and an alpha-peptide bound contiguous with the N-terminal amino group, has a strong selectivity for L-residues, and shows preference for dipeptides containing methionine or arginine, followed by hydrophobic tripeptides consisting of leucine or valine residues. This is Dipeptide-binding protein from Lactococcus lactis subsp. cremoris (strain MG1363).